A 120-amino-acid polypeptide reads, in one-letter code: Non-specific lipid-transfer protein 6 (120 aa).

The first 26 residues, 1–26 (MARSMSLKLACVVVLCLLVDAPLAQG), serve as a signal peptide directing secretion. Cystine bridges form between Cys57/Cys102 and Cys77/Cys116.

This sequence belongs to the plant LTP family. As to expression, specifically expressed in fiber cells.

In terms of biological role, plant non-specific lipid-transfer proteins transfer phospholipids as well as galactolipids across membranes. May play a role in wax or cutin deposition in the cell walls of expanding epidermal cells and certain secretory tissues. This chain is Non-specific lipid-transfer protein 6 (LTP6), found in Gossypium hirsutum (Upland cotton).